Here is a 1659-residue protein sequence, read N- to C-terminus: Vitellogenin (1659 aa).

The first 15 residues, 1-15, serve as a signal peptide directing secretion; sequence MRAVVLALTLALVAS. The Vitellogenin domain maps to 24–662; it reads FAASKTYVYK…DAATLFPRTV (639 aa). N-linked (GlcNAc...) asparagine glycosylation occurs at Asn-1089. 2 stretches are compositionally biased toward low complexity: residues 1090-1111 and 1119-1129; these read GTRASSSSSSSSSSSSRSSSSR and SSSSSSSSSSR. The tract at residues 1090–1163 is disordered; it reads GTRASSSSSS…SQSTSNVISR (74 aa). The VWFD domain maps to 1389–1565; it reads VKCSMVRDTL…SWVLPSDSCR (177 aa). 2 disulfide bridges follow: Cys-1391-Cys-1528 and Cys-1414-Cys-1564. Asn-1627 is a glycosylation site (N-linked (GlcNAc...) asparagine).

In terms of processing, phosvitin, an egg yolk storage protein, is one of the most highly phosphorylated (10%) proteins in nature. In terms of tissue distribution, produced by the liver, secreted into the blood and then sequestered by receptor mediated endocytosis into growing oocytes, where it is generally cleaved, giving rise to the respective yolk components lipovitellin-I, phosvitin, lipovitellin-II.

Its function is as follows. Precursor of the major egg-yolk proteins that are sources of nutrients during early development of oviparous organisms. The chain is Vitellogenin (vtg1) from Oncorhynchus mykiss (Rainbow trout).